Consider the following 555-residue polypeptide: Formate--tetrahydrofolate ligase (555 aa).

Thr64–Thr71 contributes to the ATP binding site.

This sequence belongs to the formate--tetrahydrofolate ligase family.

The enzyme catalyses (6S)-5,6,7,8-tetrahydrofolate + formate + ATP = (6R)-10-formyltetrahydrofolate + ADP + phosphate. It participates in one-carbon metabolism; tetrahydrofolate interconversion. This Allorhizobium ampelinum (strain ATCC BAA-846 / DSM 112012 / S4) (Agrobacterium vitis (strain S4)) protein is Formate--tetrahydrofolate ligase.